A 246-amino-acid chain; its full sequence is 14-3-3 protein beta/alpha (246 aa).

Residue M1 is modified to N-acetylmethionine; in 14-3-3 protein beta/alpha; alternate. M1 carries the post-translational modification N-acetylmethionine. Position 2 is an N-acetylthreonine; in 14-3-3 protein beta/alpha, N-terminally processed (T2). A Phosphothreonine modification is found at T2. Position 5 is an N6-acetyllysine (K5). K51 bears the N6-acetyllysine; alternate mark. K51 participates in a covalent cross-link: Glycyl lysine isopeptide (Lys-Gly) (interchain with G-Cter in SUMO2); alternate. S60 carries the post-translational modification Phosphoserine. K70 carries the N6-acetyllysine modification. Residues Y84 and Y106 each carry the 3'-nitrotyrosine modification. K117 is modified (N6-acetyllysine). 2 positions are modified to phosphoserine: S186 and S232.

It belongs to the 14-3-3 family. As to quaternary structure, homodimer. Interacts with SAMSN1 and PRKCE. Interacts with AKAP13. Interacts with SSH1 and TORC2/CRTC2. Interacts with ABL1; the interaction results in cytoplasmic location of ABL1 and inhibition of cABL-mediated apoptosis. Interacts with ROR2 (dimer); the interaction results in phosphorylation of YWHAB on tyrosine residues. Interacts with GAB2. Interacts with YAP1 (phosphorylated form). Interacts with the phosphorylated (by AKT1) form of SRPK2. Interacts with PKA-phosphorylated AANAT. Interacts with MYO1C. Interacts with SIRT2. Interacts with the 'Thr-369' phosphorylated form of DAPK2. Interacts with PI4KB, TBC1D22A and TBC1D22B. Interacts with the 'Ser-1134' and 'Ser-1161' phosphorylated form of SOS1. Interacts (via phosphorylated form) with YWHAB; this interaction occurs in a protein kinase AKT1-dependent manner. Interacts with SLITRK1. Interacts with SYNPO2 (phosphorylated form); YWHAB competes with ACTN2 for interaction with SYNPO2. Interacts with RIPOR2 (via phosphorylated form) isoform 2; this interaction occurs in a chemokine-dependent manner and does not compete for binding of RIPOR2 with RHOA nor blocks inhibition of RIPOR2-mediated RHOA activity. Interacts with MARK2 and MARK3. Interacts with TESK1; the interaction is dependent on the phosphorylation of TESK1 'Ser-437' and inhibits TESK1 kinase activity. Interacts with MEFV. Interacts with HDAC4. Interacts with ADAM22 (via C-terminus). In terms of assembly, (Microbial infection) Interacts with herpes simplex virus 1 protein UL46. (Microbial infection) Probably interacts with Chlamydia trachomatis protein IncG. Post-translationally, the alpha, brain-specific form differs from the beta form in being phosphorylated. Phosphorylated on Ser-60 by protein kinase C delta type catalytic subunit in a sphingosine-dependent fashion.

It localises to the cytoplasm. It is found in the melanosome. The protein localises to the vacuole membrane. In terms of biological role, adapter protein implicated in the regulation of a large spectrum of both general and specialized signaling pathways. Binds to a large number of partners, usually by recognition of a phosphoserine or phosphothreonine motif. Binding generally results in the modulation of the activity of the binding partner. Negative regulator of osteogenesis. Blocks the nuclear translocation of the phosphorylated form (by AKT1) of SRPK2 and antagonizes its stimulatory effect on cyclin D1 expression resulting in blockage of neuronal apoptosis elicited by SRPK2. Negative regulator of signaling cascades that mediate activation of MAP kinases via AKAP13. This chain is 14-3-3 protein beta/alpha (YWHAB), found in Homo sapiens (Human).